Reading from the N-terminus, the 187-residue chain is Large ribosomal subunit protein eL18A (187 aa).

A phosphoserine mark is found at serine 16 and serine 64. Phosphothreonine is present on residues threonine 87, threonine 89, and threonine 134. Serine 136 carries the phosphoserine modification. At threonine 138 the chain carries Phosphothreonine.

It belongs to the eukaryotic ribosomal protein eL18 family. As to quaternary structure, component of the large ribosomal subunit (LSU). Mature yeast ribosomes consist of a small (40S) and a large (60S) subunit. The 40S small subunit contains 1 molecule of ribosomal RNA (18S rRNA) and at least 33 different proteins. The large 60S subunit contains 3 rRNA molecules (25S, 5.8S and 5S rRNA) and at least 46 different proteins. eL18 interacts with NAP1.

The protein localises to the cytoplasm. Its function is as follows. Component of the ribosome, a large ribonucleoprotein complex responsible for the synthesis of proteins in the cell. The small ribosomal subunit (SSU) binds messenger RNAs (mRNAs) and translates the encoded message by selecting cognate aminoacyl-transfer RNA (tRNA) molecules. The large subunit (LSU) contains the ribosomal catalytic site termed the peptidyl transferase center (PTC), which catalyzes the formation of peptide bonds, thereby polymerizing the amino acids delivered by tRNAs into a polypeptide chain. The nascent polypeptides leave the ribosome through a tunnel in the LSU and interact with protein factors that function in enzymatic processing, targeting, and the membrane insertion of nascent chains at the exit of the ribosomal tunnel. In Schizosaccharomyces pombe (strain 972 / ATCC 24843) (Fission yeast), this protein is Large ribosomal subunit protein eL18A (rpl1801).